A 162-amino-acid chain; its full sequence is Protein-export protein SecB (162 aa).

This sequence belongs to the SecB family. Homotetramer, a dimer of dimers. One homotetramer interacts with 1 SecA dimer.

Its subcellular location is the cytoplasm. Its function is as follows. One of the proteins required for the normal export of preproteins out of the cell cytoplasm. It is a molecular chaperone that binds to a subset of precursor proteins, maintaining them in a translocation-competent state. It also specifically binds to its receptor SecA. This is Protein-export protein SecB from Legionella pneumophila (strain Paris).